Here is a 752-residue protein sequence, read N- to C-terminus: Complement C2 (752 aa).

A signal peptide spans methionine 1 to serine 20. Sushi domains lie at proline 22–proline 86, valine 87–asparagine 146, and glycine 149–glutamine 206. Cystine bridges form between cysteine 24-cysteine 64, cysteine 51-cysteine 84, cysteine 89-cysteine 131, cysteine 117-cysteine 144, cysteine 151-cysteine 191, and cysteine 177-cysteine 204. N-linked (GlcNAc...) asparagine glycosylation is present at asparagine 29. Asparagine 112 carries an N-linked (GlcNAc...) asparagine glycan. One can recognise a VWFA domain in the interval asparagine 254 to methionine 452. The MIDAS-like motif signature appears at aspartate 260–serine 264. Positions 262 and 264 each coordinate Mg(2+). Residues asparagine 290 and asparagine 333 are each glycosylated (N-linked (GlcNAc...) asparagine). Threonine 337 contributes to the Mg(2+) binding site. 3 disulfide bridges follow: cysteine 463–cysteine 581, cysteine 492–cysteine 508, and cysteine 584–cysteine 600. The Peptidase S1 domain occupies glycine 464–glycine 744. 2 N-linked (GlcNAc...) asparagine glycosylation sites follow: asparagine 467 and asparagine 471. Active-site charge relay system residues include histidine 507 and aspartate 561. 2 N-linked (GlcNAc...) asparagine glycosylation sites follow: asparagine 621 and asparagine 651. Cystine bridges form between cysteine 638–cysteine 665 and cysteine 675–cysteine 705. The Charge relay system role is filled by serine 679.

It belongs to the peptidase S1 family. As to quaternary structure, serine protease component of the C3 convertase, also named C4bC2b, composed of the serine protease complement C2b and complement C4b. Serine protease component of the C5 convertase, also named C4bC2bC3b, composed of the serine protease complement C2b, complement C3b, as well as complement C4b. The cofactor is Mg(2+). Requires Mn(2+) as cofactor. In terms of processing, cleaved and activated by different proteases depending on the complement pathway to generate complement C2a and serine protease complement C2b chains. Cleaved and activated by C1S following activation by the classical complement system. Cleaved and activated by MASP2 following activation by the lectin complement system. Cleaved and activated by GZMK following activation by the GZMK complement system.

The protein resides in the secreted. It is found in the cell surface. It carries out the reaction Selective cleavage of Arg-|-Ser bond in complement component C3 alpha-chain to form C3a and C3b, and Arg-|-Xaa bond in complement component C5 alpha-chain to form C5a and C5b.. Functionally, precursor of the catalytic component of the C3 and C5 convertase complexes, which are part of the complement pathway, a cascade of proteins that leads to phagocytosis and breakdown of pathogens and signaling that strengthens the adaptive immune system. Component C2 is part of the classical, lectin and GZMK complement systems. Catalytic component of the complement C3 and C5 convertase complexes. Following complement activation, recruited to the surface of pathogens by complement C4b opsonin to form the C3 convertase, or C3b and C4b opsonins to form the C5 convertase. As part of the C3 convertase, cleaves and activate C3 into C3a anaphylatoxin and C3b opsonin, the next components of the complement pathways. As part of the C5 convertase, cleaves and activate C5 into C5a anaphylatoxin and C5b component of the membrane attack complex. This is Complement C2 from Pan troglodytes (Chimpanzee).